Reading from the N-terminus, the 296-residue chain is MIKYFNRKTKQYEIEQVAGEKYLKWTYCSPIGMKLLELIIKKKIFSKLYGYFCNSRYSKKNIYPFIKNFNINMDDYIEQTDNFKCFNDFFSRALKNNSRSIDRDEKVLISPGDGRLQVYENIDLNKIVQIKGFTYSLYNLINDIEIAKRFYKGTCLILRLCPTDYHRFHFIDYGICDFTHKIKGNYYSVNPIALRNISNIFCRNKREWSIFHSKNFGDILYVEVGATCVGSIVQTYFPGKHVSKGDEKGYFKFGGSTIILFFEQNKIRIHKDLLEQSNMGYETKVLMGESIGIKYQ.

Active-site charge relay system; for autoendoproteolytic cleavage activity residues include Asp-113, His-169, and Ser-256. Catalysis depends on Ser-256, which acts as the Schiff-base intermediate with substrate; via pyruvic acid; for decarboxylase activity. A Pyruvic acid (Ser); by autocatalysis modification is found at Ser-256.

It belongs to the phosphatidylserine decarboxylase family. PSD-B subfamily. Prokaryotic type II sub-subfamily. As to quaternary structure, heterodimer of a large membrane-associated beta subunit and a small pyruvoyl-containing alpha subunit. The cofactor is pyruvate. Post-translationally, is synthesized initially as an inactive proenzyme. Formation of the active enzyme involves a self-maturation process in which the active site pyruvoyl group is generated from an internal serine residue via an autocatalytic post-translational modification. Two non-identical subunits are generated from the proenzyme in this reaction, and the pyruvate is formed at the N-terminus of the alpha chain, which is derived from the carboxyl end of the proenzyme. The autoendoproteolytic cleavage occurs by a canonical serine protease mechanism, in which the side chain hydroxyl group of the serine supplies its oxygen atom to form the C-terminus of the beta chain, while the remainder of the serine residue undergoes an oxidative deamination to produce ammonia and the pyruvoyl prosthetic group on the alpha chain. During this reaction, the Ser that is part of the protease active site of the proenzyme becomes the pyruvoyl prosthetic group, which constitutes an essential element of the active site of the mature decarboxylase.

Its subcellular location is the cell membrane. The enzyme catalyses a 1,2-diacyl-sn-glycero-3-phospho-L-serine + H(+) = a 1,2-diacyl-sn-glycero-3-phosphoethanolamine + CO2. Its pathway is phospholipid metabolism; phosphatidylethanolamine biosynthesis; phosphatidylethanolamine from CDP-diacylglycerol: step 2/2. Functionally, catalyzes the formation of phosphatidylethanolamine (PtdEtn) from phosphatidylserine (PtdSer). The protein is Phosphatidylserine decarboxylase proenzyme of Clostridium kluyveri (strain ATCC 8527 / DSM 555 / NBRC 12016 / NCIMB 10680 / K1).